Here is a 5911-residue protein sequence, read N- to C-terminus: Nonribosomal peptide synthetase 30 (5911 aa).

Residues 1 to 22 (MVPEKPTAQSKSGIGEPFRAGD) are disordered. The tract at residues 352–754 (ALIQPSSTAV…GRKDAQVKIR (403 aa)) is adenylation 1. The 78-residue stretch at 891-968 (PRPFSVEYSL…EAAAIVARGT (78 aa)) folds into the Carrier 1 domain. Serine 928 is subject to O-(pantetheine 4'-phosphoryl)serine. The segment at 1007-1422 (EDAFPCTPLQ…ERLIFVIDQL (416 aa)) is condensation 1. An adenylation 2 region spans residues 1467 to 1865 (ERALSQPDRP…SLMFVGRKAD (399 aa)). In terms of domain architecture, Carrier 2 spans 2001–2077 (QPTSELEAEM…NICSHSYYCS (77 aa)). The residue at position 2038 (serine 2038) is an O-(pantetheine 4'-phosphoryl)serine. The tract at residues 2121 to 2538 (QDAYPCTPLQ…GPDINMSDIG (418 aa)) is condensation 2. The tract at residues 2568-2977 (EEQARLRPEA…GRKDSQVKIR (410 aa)) is adenylation 3. The region spanning 3110–3186 (QPSTNAQREL…LIADNSKSIK (77 aa)) is the Carrier 3 domain. Serine 3147 is modified (O-(pantetheine 4'-phosphoryl)serine). Positions 3227-3652 (VQDAYPCTPL…LELVIQAFMA (426 aa)) are condensation 3. The tract at residues 3701–4108 (EERVREQPNA…GRKDSQVKIR (408 aa)) is adenylation 4. The Carrier 4 domain occupies 4248–4325 (PPTTPLECQM…DIIATMTKNK (78 aa)). O-(pantetheine 4'-phosphoryl)serine is present on serine 4285. The disordered stretch occupies residues 4326-4347 (ATGASRRLPRDDDEPIPHTKYA). The interval 4353-4793 (SYAQGRLWFL…SLPLLTEDGR (441 aa)) is condensation 4. The segment at 4819–5231 (FKEQVSRHPN…GRMDVQVKIR (413 aa)) is adenylation 5. The 77-residue stretch at 5360–5436 (KPTTDMEVAL…ALARRQEEIV (77 aa)) folds into the Carrier 5 domain. O-(pantetheine 4'-phosphoryl)serine is present on serine 5397. The segment at 5474 to 5828 (VEDMLPLTSM…GIKMKLHFFT (355 aa)) is condensation 5.

This sequence belongs to the NRP synthetase family.

It functions in the pathway secondary metabolite biosynthesis. Nonribosomal peptide synthetase; part of the gene cluster that mediates the biosynthesis of sansalvamide, a cyclic pentadepsipeptide that shows promising results as potential anti-cancer drug. The nonribosmal peptide synthetase NRPS30 produces sansalvamide by incorporating successively one phenylalanine, one leucine, one alpha-hydroxyisocaproic acid (HICA), one valine and one leucine before sansalvamide is released from by cyclization by the terminal C domain of NRPS30. The HICA residue is probably provided by reduction of alpha-ketoisocaproate by the cluster-specific aldo-keto reductase (NECHADRAFT_45914). This is Nonribosomal peptide synthetase 30 from Fusarium vanettenii (strain ATCC MYA-4622 / CBS 123669 / FGSC 9596 / NRRL 45880 / 77-13-4) (Fusarium solani subsp. pisi).